Here is a 244-residue protein sequence, read N- to C-terminus: ATP synthase subunit a (244 aa).

The next 5 membrane-spanning stretches (helical) occupy residues 17 to 37, 75 to 95, 112 to 132, 170 to 190, and 221 to 241; these read LTNI…AILT, FLAL…LGLP, DPAI…YYGV, LYGN…LATS, and GAIQ…HKIS.

This sequence belongs to the ATPase A chain family. In terms of assembly, F-type ATPases have 2 components, CF(1) - the catalytic core - and CF(0) - the membrane proton channel. CF(1) has five subunits: alpha(3), beta(3), gamma(1), delta(1), epsilon(1). CF(0) has three main subunits: a(1), b(2) and c(9-12). The alpha and beta chains form an alternating ring which encloses part of the gamma chain. CF(1) is attached to CF(0) by a central stalk formed by the gamma and epsilon chains, while a peripheral stalk is formed by the delta and b chains. The F(1)F(0) complex interacts with SpoIIIJ and YqjG; YqgA is found in the same complex.

The protein localises to the cell membrane. In terms of biological role, key component of the proton channel; it plays a direct role in the translocation of protons across the membrane. The chain is ATP synthase subunit a from Bacillus subtilis (strain 168).